Reading from the N-terminus, the 164-residue chain is MEMTNAQRLLLSNQYKMMSMLDPENAERYRRLQTIIERGFGLQLRELDRDFGELPEETCRSIIDIMEMHHALQVSYNNLKDRQDIDARRLEFLGFDAATEARYLSYVRFLVNTEGRYTHFDCGSHGFNAQTKMWDKYLRMLAVWHACPRQYHLSAVEIMQILNA.

It belongs to the UPF0304 family.

This Edwardsiella ictaluri (strain 93-146) protein is UPF0304 protein NT01EI_2691.